We begin with the raw amino-acid sequence, 896 residues long: Zinc finger protein 574 (896 aa).

C2H2-type zinc fingers lie at residues 16-38, 76-98, and 126-148; these read YVCS…QNSH, YQCL…QELH, and YECV…RQTH. Phosphoserine is present on serine 164. The C2H2-type 4 zinc finger occupies 214-236; it reads YKCSECSQLFQLPADFLEHQATH. Positions 239 to 301 are disordered; the sequence is APVPESQEPA…RARRNNSGEA (63 aa). Residues 247 to 257 show a composition bias toward polar residues; sequence PALQQEVQASS. Over residues 274–287 the composition is skewed to basic and acidic residues; that stretch reads HSYELRNGEAIGRD. Residue serine 298 is modified to Phosphoserine. 4 consecutive C2H2-type zinc fingers follow at residues 309-331, 336-358, 364-386, and 392-413; these read LFCS…LRSH, FKCP…LGDH, FLCV…RRAH, and HSCP…RRTH. Residues 434–460 are disordered; sequence FPEPAPAETGEPEAPEPPVSEETSAGP. 6 consecutive C2H2-type zinc fingers follow at residues 466 to 489, 495 to 517, 523 to 545, 551 to 573, 579 to 601, and 607 to 630; these read YRCL…RFVH, HKCS…LRTH, FPCP…RLTH, YRCG…RLVH, YRCQ…RYHH, and YKCR…LVVH. The C2H2-type 15; degenerate zinc-finger motif lies at 636–659; the sequence is HRCPSCGAAFPSSLRLREHRCAAA. A C2H2-type 16 zinc finger spans residues 667 to 689; sequence FECGTCGKKVGSAARLQAHEAAH. The tract at residues 687 to 733 is disordered; that stretch reads AAHAAAGPGEVLAKEPPAPRAPRATRAPVASPAGLGGTATASPAAPA. The span at 707-732 shows a compositional bias: low complexity; it reads APRATRAPVASPAGLGGTATASPAAP. Position 717 is a phosphoserine (serine 717). At threonine 724 the chain carries Phosphothreonine. Serine 728 is modified (phosphoserine). 4 C2H2-type zinc fingers span residues 738–760, 766–788, 794–816, and 822–844; these read LECS…RRIH, YPCP…RRLH, FACE…RRIH, and YSCP…RKTH. Arginine 832 bears the Asymmetric dimethylarginine mark.

Belongs to the krueppel C2H2-type zinc-finger protein family.

It is found in the nucleus. Functionally, may be involved in transcriptional regulation. This is Zinc finger protein 574 (ZNF574) from Macaca fascicularis (Crab-eating macaque).